Consider the following 383-residue polypeptide: MSSNPELKYTGKVKVATVQAEPVILDADATIDKAIGFIEEAAKNGAEFLAFPEVWIPGYPYWAWIGDVKWAVSDFIPKYHENSLTLGDDRMRRLQLAARQNNIALVMGYSEKDGASRYLSQVFIDQNGDIVANRRKLKPTHVERTIYGEGNGTDFLTHDFGFGRVGGLNCWEHFQPLSKYMMYSLNEQIHVASWPAMFALTPDVHQLSVEANDTVTRSYAIEGQTFVLASTHVIGKATQDLFAGDDDAKRALLPLGQGWARIYGPDGKSLAEPLPEDAEGLLYAELDLEQIILAKAAADPAGHYSRPDVLSLKIDTRNHTPVQYITADGRTSLNSNSRVENYRLHQLADIEKYENAEAATLPLDAPAPAPAPEQKSGRAKAEA.

In terms of domain architecture, CN hydrolase spans 13 to 288 (VKVATVQAEP…EGLLYAELDL (276 aa)). Glutamate 53 functions as the Proton acceptor in the catalytic mechanism. The active-site Proton donor is lysine 136. Cysteine 170 (nucleophile) is an active-site residue. The interval 359–383 (ATLPLDAPAPAPAPEQKSGRAKAEA) is disordered.

This sequence belongs to the carbon-nitrogen hydrolase superfamily. Nitrilase family.

The catalysed reaction is an aliphatic nitrile + 2 H2O = a carboxylate + NH4(+). In terms of biological role, acts on aliphatic nitriles such as acrylonitrile, crotononitrile and glutaronitrile. This chain is Aliphatic nitrilase, found in Rhodococcus rhodochrous.